The sequence spans 343 residues: Ion-translocating oxidoreductase complex subunit D (343 aa).

A run of 4 helical transmembrane segments spans residues 24–44 (VLLATVPGILALTWLFGAGTL), 45–65 (YNLALASLFALAFEAAILAAR), 69–91 (LAFFLKDYSALVTAVLLALALPP), and 124–144 (AMLGYVVVLISFPVEMTSWPA). Position 171 is an FMN phosphoryl threonine (Thr-171). The next 5 membrane-spanning stretches (helical) occupy residues 197–217 (FGGAGSEAVNLAFLAGGLYLL), 221–241 (LITWHAPVGMLAALFVMSLLF), 251–271 (GSPLFHLLTGATMLGAFFIVT), 284–304 (LVFGIGVGVLVYVIRAWGGYP), and 305–325 (DAVAFAVLLMNLAAPTIDYYT).

It belongs to the NqrB/RnfD family. As to quaternary structure, the complex is composed of six subunits: RnfA, RnfB, RnfC, RnfD, RnfE and RnfG. The cofactor is FMN.

Its subcellular location is the cell inner membrane. Its function is as follows. Part of a membrane-bound complex that couples electron transfer with translocation of ions across the membrane. In Ectopseudomonas mendocina (strain ymp) (Pseudomonas mendocina), this protein is Ion-translocating oxidoreductase complex subunit D.